Here is a 65-residue protein sequence, read N- to C-terminus: Crotamine (65 aa).

The signal sequence occupies residues 1–22; sequence MKILYLLFAFLFLAFLSEPGNA. 2 short sequence motifs (nuclear localization signal) span residues 24–40 and 49–61; these read KQCH…EKIC and KMDC…CCKK. Intrachain disulfides connect Cys-26–Cys-58, Cys-33–Cys-52, and Cys-40–Cys-59.

This sequence belongs to the crotamine-myotoxin family. In terms of assembly, monomer. In terms of tissue distribution, expressed by the venom gland.

The protein localises to the secreted. Cationic peptide that possesses multiple functions. It acts as a cell-penetrating peptide (CPP), and as a potent voltage-gated potassium channel inhibitor. It exhibits antimicrobial activities, hind limb paralysis, and severe muscle necrosis by a non-enzymatic mechanism. As a cell-penetrating peptide, crotamine has high specificity for actively proliferating cells, and interacts inside the cell with subcellular and subnuclear structures, like vesicular compartments, chromosomes and centrioles. It penetrates into the cells as fast as five minutes after its addition to cell culture medium. In vivo, after intraperitoneal administration, it is found in cells of peritoneal fluid and bone marrow, demonstrating preferential nuclear and perinuclear localization. To enter the cell, it interacts with the chains of heparan sulfate membrane proteoglycan (HSPG), and is endocytosed (in complex with HSPG) in vesicles which are transported into the cell with the help of clathrin. Inside the cell, crotamine accumulates in lysosomal vesicles. As soon as the peptide accumulates in endosomes/lysosomes vesicles, these compartments are disrupted and their contents released into the cytosol. This loss of lysosomal content induces cell death at high concentrations, or promotes the distribution of crotamine in cytoplasmic compartments, which is a step before crotamine nuclear uptake. As a potassium channel inhibitor, this toxin selectively inhibits Kv1.1/KCNA1, Kv1.2/KCNA2 and Kv1.3/KCNA3 channels with an IC(50) of 369, 386 and 287 nM, respectively. The inhibition of Kv1.3/KCNA channels induced by this toxin occurs rapidly and is voltage-independent. The channel inhibition is reversible after washing, suggesting a pure and classical channel blockage effect, without effects in potassium channel kinetics. As an antimicrobial peptide, crotamine shows antibacterial activity against E.coli and B.subtilis, and antifungal activity against Candida spp., Trichosporon spp. and C.neoformans. It kills bacteria through membrane permeabilization. The protein is Crotamine (CRO2) of Crotalus durissus terrificus (South American rattlesnake).